Reading from the N-terminus, the 473-residue chain is Photosystem II CP43 reaction center protein (473 aa).

A propeptide spanning residues 1 to 14 (MKTLYSLRRFYHVE) is cleaved from the precursor. Threonine 15 is modified (N-acetylthreonine). The residue at position 15 (threonine 15) is a Phosphothreonine. 5 helical membrane passes run 69 to 93 (LFEV…PHLA), 134 to 155 (LLGP…KDRN), 178 to 200 (KALY…RKIT), 255 to 275 (KPFA…LSYS), and 291 to 312 (WFNN…ASQA). Glutamate 367 contributes to the [CaMn4O5] cluster binding site. Residues 447-471 (RARAAAAGFEKGIDRDFEPVLSMTP) form a helical membrane-spanning segment.

The protein belongs to the PsbB/PsbC family. PsbC subfamily. PSII is composed of 1 copy each of membrane proteins PsbA, PsbB, PsbC, PsbD, PsbE, PsbF, PsbH, PsbI, PsbJ, PsbK, PsbL, PsbM, PsbT, PsbX, PsbY, PsbZ, Psb30/Ycf12, at least 3 peripheral proteins of the oxygen-evolving complex and a large number of cofactors. It forms dimeric complexes. Binds multiple chlorophylls and provides some of the ligands for the Ca-4Mn-5O cluster of the oxygen-evolving complex. It may also provide a ligand for a Cl- that is required for oxygen evolution. PSII binds additional chlorophylls, carotenoids and specific lipids. serves as cofactor.

The protein localises to the plastid. It localises to the chloroplast thylakoid membrane. Its function is as follows. One of the components of the core complex of photosystem II (PSII). It binds chlorophyll and helps catalyze the primary light-induced photochemical processes of PSII. PSII is a light-driven water:plastoquinone oxidoreductase, using light energy to abstract electrons from H(2)O, generating O(2) and a proton gradient subsequently used for ATP formation. This is Photosystem II CP43 reaction center protein from Crucihimalaya wallichii (Rock-cress).